We begin with the raw amino-acid sequence, 314 residues long: N-myc-interactor (314 aa).

A disordered region spans residues 1–24; that stretch reads MDADKDNIKQACDERSAEMDDMRG. The residue at position 16 (serine 16) is a Phosphoserine. Residues 31–65 adopt a coiled-coil conformation; it reads VHEIMSENKELDEEIKKLEAELQSDAREFQIKENV. NID domains lie at 104-193 and 202-293; these read GQAL…GEVE and RSAV…EVEV.

This sequence belongs to the NMI family. In terms of assembly, interacts with MYCN and MYC, as well as with other transcription factors with a Zip, HLH or a HLH-Zip motif. Interacts with all STAT proteins except STAT2. Interacts with IRF7, the interaction is direct and leads to the inhibition of IRF7-mediated type I IFN production. Interacts (via coiled-coil domain) with TRIM21 (via the SPRY domain); the interaction leads to 'Lys-63'-linked ubiquitination of NMI. Interacts with IFI35; the interaction is direct and is facilitated by TRIM21. Interacts with TLR4; the interaction is direct and leads to NF-kappa-B activation. Post-translationally, may be ubiquitinated. As to expression, expressed in macrophages.

Its subcellular location is the cytoplasm. It is found in the nucleus. The protein resides in the secreted. Acts as a signaling pathway regulator involved in innate immune system response. In response to interleukin 2/IL2 and interferon IFN-gamma/IFNG, interacts with signal transducer and activator of transcription/STAT which activate the transcription of downstream genes involved in a multitude of signals for development and homeostasis. Enhances the recruitment of CBP/p300 coactivators to STAT1 and STAT5, resulting in increased STAT1- and STAT5-dependent transcription. In response to interferon IFN-alpha, associates in a complex with transcriptional regulator IFI35 to regulate immune response; the complex formation prevents proteasome-mediated degradation of IFI35. In complex with IFI35, negatively regulates nuclear factor NF-kappa-B signaling by inhibiting the nuclear translocation, activation and transcription of NF-kappa-B subunit p65/RELA, resulting in the inhibition of endothelial cell proliferation, migration and re-endothelialization of injured arteries. Negatively regulates virus-triggered type I interferon/IFN production by inducing proteosome-dependent degradation of IRF7, a transcriptional regulator of type I IFN, thereby interfering with cellular antiviral responses. Beside its role as an intracellular signaling pathway regulator, also functions extracellularly as damage-associated molecular patterns (DAMPs) to promote inflammation, when actively released by macrophage to the extracellular space during cell injury or pathogen invasion. Macrophage-secreted NMI activates NF-kappa-B signaling in adjacent macrophages through Toll-like receptor 4/TLR4 binding and activation, thereby inducing NF-kappa-B translocation from the cytoplasm into the nucleus which promotes the release of pro-inflammatory cytokines. The chain is N-myc-interactor from Mus musculus (Mouse).